Here is a 66-residue protein sequence, read N- to C-terminus: Large ribosomal subunit protein bL33c (66 aa).

Belongs to the bacterial ribosomal protein bL33 family.

It is found in the plastid. It localises to the chloroplast. This is Large ribosomal subunit protein bL33c from Barbarea verna (Land cress).